Here is a 159-residue protein sequence, read N- to C-terminus: Phosphopantetheine adenylyltransferase (159 aa).

Residue threonine 10 participates in substrate binding. Residues 10–11 (TF) and histidine 18 contribute to the ATP site. Substrate contacts are provided by lysine 42, methionine 74, and arginine 88. Residues 89–91 (GLR), glutamate 99, and 124–130 (WSFISSS) each bind ATP.

It belongs to the bacterial CoaD family. Homohexamer. The cofactor is Mg(2+).

Its subcellular location is the cytoplasm. It catalyses the reaction (R)-4'-phosphopantetheine + ATP + H(+) = 3'-dephospho-CoA + diphosphate. The protein operates within cofactor biosynthesis; coenzyme A biosynthesis; CoA from (R)-pantothenate: step 4/5. Functionally, reversibly transfers an adenylyl group from ATP to 4'-phosphopantetheine, yielding dephospho-CoA (dPCoA) and pyrophosphate. This Salmonella choleraesuis (strain SC-B67) protein is Phosphopantetheine adenylyltransferase.